The following is a 330-amino-acid chain: Aspartate--ammonia ligase (330 aa).

Belongs to the class-II aminoacyl-tRNA synthetase family. AsnA subfamily.

It is found in the cytoplasm. It carries out the reaction L-aspartate + NH4(+) + ATP = L-asparagine + AMP + diphosphate + H(+). It functions in the pathway amino-acid biosynthesis; L-asparagine biosynthesis; L-asparagine from L-aspartate (ammonia route): step 1/1. This is Aspartate--ammonia ligase from Escherichia coli O139:H28 (strain E24377A / ETEC).